The following is a 426-amino-acid chain: Glutamyl-tRNA reductase (426 aa).

Substrate contacts are provided by residues 50–53, serine 108, 113–115, and glutamine 119; these read TCNR and EPQ. The active-site Nucleophile is the cysteine 51. 188 to 193 serves as a coordination point for NADP(+); sequence GAGEMI.

It belongs to the glutamyl-tRNA reductase family. As to quaternary structure, homodimer.

It carries out the reaction (S)-4-amino-5-oxopentanoate + tRNA(Glu) + NADP(+) = L-glutamyl-tRNA(Glu) + NADPH + H(+). The protein operates within porphyrin-containing compound metabolism; protoporphyrin-IX biosynthesis; 5-aminolevulinate from L-glutamyl-tRNA(Glu): step 1/2. Catalyzes the NADPH-dependent reduction of glutamyl-tRNA(Glu) to glutamate 1-semialdehyde (GSA). The chain is Glutamyl-tRNA reductase from Polaromonas sp. (strain JS666 / ATCC BAA-500).